Reading from the N-terminus, the 90-residue chain is Small ribosomal subunit protein uS15c (90 aa).

It belongs to the universal ribosomal protein uS15 family. Part of the 30S ribosomal subunit.

The protein resides in the plastid. It localises to the chloroplast. This chain is Small ribosomal subunit protein uS15c (rps15), found in Platanus occidentalis (Sycamore).